Here is a 489-residue protein sequence, read N- to C-terminus: Lysine--tRNA ligase (489 aa).

Mg(2+) contacts are provided by glutamate 399 and glutamate 406.

This sequence belongs to the class-II aminoacyl-tRNA synthetase family. As to quaternary structure, homodimer. It depends on Mg(2+) as a cofactor.

The protein localises to the cytoplasm. It carries out the reaction tRNA(Lys) + L-lysine + ATP = L-lysyl-tRNA(Lys) + AMP + diphosphate. The protein is Lysine--tRNA ligase of Malacoplasma penetrans (strain HF-2) (Mycoplasma penetrans).